Consider the following 163-residue polypeptide: Regulatory protein RecX (163 aa).

The tract at residues 1 to 21 (MSDAEDIPTGRKRRPREQTPV) is disordered.

Belongs to the RecX family.

The protein resides in the cytoplasm. Functionally, modulates RecA activity. This Stenotrophomonas maltophilia (strain R551-3) protein is Regulatory protein RecX.